We begin with the raw amino-acid sequence, 36 residues long: Thrombin (36 aa).

Positions 19–36 constitute a Peptidase S1 domain; sequence IVKGIDAEVASAPMQVML.

Belongs to the peptidase S1 family. As to quaternary structure, forms a heterodimer with SERPINA5. The gamma-carboxyglutamyl residues, which bind calcium ions, result from the carboxylation of glutamyl residues by a microsomal enzyme, the vitamin K-dependent carboxylase. The modified residues are necessary for the calcium-dependent interaction with a negatively charged phospholipid surface, which is essential for the conversion of prothrombin to thrombin. Post-translationally, N-glycosylated. Expressed by the liver and secreted in plasma.

It is found in the secreted. It carries out the reaction Selective cleavage of Arg-|-Gly bonds in fibrinogen to form fibrin and release fibrinopeptides A and B.. Its activity is regulated as follows. Inhibited by SERPINA5. Its function is as follows. Thrombin, which cleaves bonds after Arg and Lys, converts fibrinogen to fibrin and activates factors V, VII, VIII, XIII, and, in complex with thrombomodulin, protein C. Functions in blood homeostasis, inflammation and wound healing. This Salmo salar (Atlantic salmon) protein is Thrombin.